Consider the following 305-residue polypeptide: tRNA uridine(34) hydroxylase (305 aa).

Residues 130–228 enclose the Rhodanese domain; that stretch reads DDPDTLVIDT…YLGEIPEQES (99 aa). Cys188 functions as the Cysteine persulfide intermediate in the catalytic mechanism.

The protein belongs to the TrhO family.

It catalyses the reaction uridine(34) in tRNA + AH2 + O2 = 5-hydroxyuridine(34) in tRNA + A + H2O. Its function is as follows. Catalyzes oxygen-dependent 5-hydroxyuridine (ho5U) modification at position 34 in tRNAs. The chain is tRNA uridine(34) hydroxylase from Synechococcus sp. (strain CC9902).